A 1001-amino-acid polypeptide reads, in one-letter code: X-linked retinitis pigmentosa GTPase regulator (1001 aa).

6 RCC1 repeats span residues 54–105 (NKLY…STDT), 106–158 (GGVY…LTED), 159–208 (GKLF…VTMD), 209–261 (GELY…LTEK), 262–313 (VVYA…MTEL), and 314–367 (GLLY…FATP). Residues 404-428 (SLSARLRRRERERPPCSASMVGTLP) form a disordered region. Ser-518 is modified (phosphoserine). Composition is skewed to basic and acidic residues over residues 631-641 (KKIRESEENSK) and 659-671 (EDNK…RRSS). Disordered regions lie at residues 631–738 (KKIR…WYDR), 794–869 (NLEF…EGSE), 902–925 (PKGH…DPTS), and 962–1001 (GDQI…CTIL). Composition is skewed to acidic residues over residues 679–691 (SETE…DSYM) and 717–731 (EKDE…EVET). 3 stretches are compositionally biased toward basic and acidic residues: residues 794–818 (NLEF…EKEA), 847–857 (EERKEGEKEIV), and 902–911 (PKGHMYDRVK). Residues 976 to 1001 (QNHMGQNLQDSTTPNMEGKSKSCTIL) are compositionally biased toward polar residues. Position 998 is a cysteine methyl ester (Cys-998). Residue Cys-998 is the site of S-geranylgeranyl cysteine attachment. Positions 999–1001 (TIL) are cleaved as a propeptide — removed in mature form.

In terms of assembly, interacts with SPATA7. Interacts with PDE6D. Interacts with RPGRIP1 and RPGRIP1L; PDE6D, RPGRIP1 and RPGRIP1L may compete for the same binding sites. Interacts with NPM1. Interacts with PDE6D. Isoform 5 interacts (via N-terminus) with SMC1A and SMC3. Isoform 5 interacts with CEP290. Interacts with WHRN. Interacts with RAB37 and RAB8A (in GDP-bound forms); functions as GEF for RAB37 and RAB8A. In terms of processing, prenylated. In terms of tissue distribution, expressed in the retina (at protein level). Located mainly in the connecting cilia between the outer segment and inner segment and also observed in the outer plexiform layer, inner plexiform layer, and ganglion cell layer of the retinas. Isoform 1: Expressed in the retina (at protein level). Isoform 5: Expressed in the retina (at protein level). Expressed in the brain. Expressed in the testis (at protein level). Expressed in kidney (at protein level).

It is found in the golgi apparatus. The protein localises to the cytoplasm. Its subcellular location is the cytoskeleton. The protein resides in the microtubule organizing center. It localises to the centrosome. It is found in the cell projection. The protein localises to the cilium. Its subcellular location is the cilium basal body. The protein resides in the cilium axoneme. It localises to the flagellum axoneme. Its function is as follows. Acts as a guanine-nucleotide releasing factor (GEF) for RAB8A and RAB37 by promoting the conversion of inactive RAB-GDP to the active form RAB-GTP. GEF activity towards RAB8A may facilitate ciliary trafficking by modulating ciliary intracellular localization of RAB8A. GEF activity towards RAB37 maintains autophagic homeostasis and retinal function. Involved in photoreceptor integrity. May control cilia formation by regulating actin stress filaments and cell contractility. May be involved in microtubule organization and regulation of transport in primary cilia. In terms of biological role, isoform 5 may play a critical role in spermatogenesis and in intraflagellar transport processes. The protein is X-linked retinitis pigmentosa GTPase regulator of Mus musculus (Mouse).